We begin with the raw amino-acid sequence, 86 residues long: Small ribosomal subunit protein bS20 (86 aa).

The disordered stretch occupies residues 1–23 (MANIKSSKKDSIKSRKKKKLNAS).

Belongs to the bacterial ribosomal protein bS20 family.

In terms of biological role, binds directly to 16S ribosomal RNA. The sequence is that of Small ribosomal subunit protein bS20 from Buchnera aphidicola subsp. Baizongia pistaciae (strain Bp).